We begin with the raw amino-acid sequence, 467 residues long: 6-phospho-beta-galactosidase (467 aa).

Residues Gln19, His116, Asn159, Glu160, and Asn297 each contribute to the D-galactose 6-phosphate site. Residue Glu160 is the Proton donor of the active site. Glu375 serves as the catalytic Nucleophile. Positions 428, 429, 435, and 437 each coordinate D-galactose 6-phosphate.

Belongs to the glycosyl hydrolase 1 family.

It catalyses the reaction a 6-phospho-beta-D-galactoside + H2O = D-galactose 6-phosphate + an alcohol. It functions in the pathway carbohydrate metabolism; lactose degradation; D-galactose 6-phosphate and beta-D-glucose from lactose 6-phosphate: step 1/1. Its activity is regulated as follows. Inhibited by both galactose-6-phosphate and ATP. The sequence is that of 6-phospho-beta-galactosidase from Leptotrichia buccalis (strain ATCC 14201 / DSM 1135 / JCM 12969 / NCTC 10249 / C-1013-b).